We begin with the raw amino-acid sequence, 122 residues long: MIQSFTRLTVADNSGAKEVMCIKVLGGSKRRYATVGDVIIASVKKALPNGKIKKGQVVKAVVVRTKKEVQRDNGSLIRFDDNAAVILDNKREPVGTRIFGPVGREVRYANFMKIVSLAPEVL.

Belongs to the universal ribosomal protein uL14 family. As to quaternary structure, part of the 50S ribosomal subunit. Forms a cluster with proteins L3 and L19. In the 70S ribosome, L14 and L19 interact and together make contacts with the 16S rRNA in bridges B5 and B8.

Binds to 23S rRNA. Forms part of two intersubunit bridges in the 70S ribosome. The polypeptide is Large ribosomal subunit protein uL14 (Wolinella succinogenes (strain ATCC 29543 / DSM 1740 / CCUG 13145 / JCM 31913 / LMG 7466 / NCTC 11488 / FDC 602W) (Vibrio succinogenes)).